The primary structure comprises 762 residues: Xaa-Pro dipeptidyl-peptidase (762 aa).

Active-site charge relay system residues include serine 349, aspartate 469, and histidine 499.

This sequence belongs to the peptidase S15 family. In terms of assembly, homodimer.

The protein localises to the cytoplasm. The enzyme catalyses Hydrolyzes Xaa-Pro-|- bonds to release unblocked, N-terminal dipeptides from substrates including Ala-Pro-|-p-nitroanilide and (sequentially) Tyr-Pro-|-Phe-Pro-|-Gly-Pro-|-Ile.. In terms of biological role, removes N-terminal dipeptides sequentially from polypeptides having unsubstituted N-termini provided that the penultimate residue is proline. This is Xaa-Pro dipeptidyl-peptidase from Streptococcus sanguinis (strain SK36).